Consider the following 103-residue polypeptide: Small ribosomal subunit protein uS10 (103 aa).

This sequence belongs to the universal ribosomal protein uS10 family. As to quaternary structure, part of the 30S ribosomal subunit.

Functionally, involved in the binding of tRNA to the ribosomes. The sequence is that of Small ribosomal subunit protein uS10 from Nitratiruptor sp. (strain SB155-2).